A 172-amino-acid chain; its full sequence is MQNKRESYTREDLLASSQGELFGPGYPQLPAPNMLMMDRVTKMSETEGDFGKGLILAELDIKPDLWFFDCHFPGDPVMPGCLGLDAMWQLVGFFLGWVGGKGKGRALGVGEVKFTGQILPTAKKVTYEIHMKRVVNRKLVMGLADGRVLVDGKEIYVAKDLKVGLFQDTSAF.

Residue His-71 is part of the active site.

Belongs to the thioester dehydratase family. FabA subfamily. Homodimer.

It localises to the cytoplasm. It carries out the reaction a (3R)-hydroxyacyl-[ACP] = a (2E)-enoyl-[ACP] + H2O. The enzyme catalyses (3R)-hydroxydecanoyl-[ACP] = (2E)-decenoyl-[ACP] + H2O. The catalysed reaction is (2E)-decenoyl-[ACP] = (3Z)-decenoyl-[ACP]. It functions in the pathway lipid metabolism; fatty acid biosynthesis. Necessary for the introduction of cis unsaturation into fatty acids. Catalyzes the dehydration of (3R)-3-hydroxydecanoyl-ACP to E-(2)-decenoyl-ACP and then its isomerization to Z-(3)-decenoyl-ACP. Can catalyze the dehydratase reaction for beta-hydroxyacyl-ACPs with saturated chain lengths up to 16:0, being most active on intermediate chain length. This chain is 3-hydroxydecanoyl-[acyl-carrier-protein] dehydratase, found in Vibrio vulnificus (strain CMCP6).